The sequence spans 5596 residues: Midasin (5596 aa).

Met1 is subject to N-acetylmethionine. AAA-ATPase protomer stretches follow at residues 307–591 (SVCK…TSKL), 659–978 (LIEQ…ASNP), 1048–1316 (KEPT…QEEI), and 1362–1616 (HIVW…NKMG). ATP is bound at residue 329–336 (GPIGCGKT). A disordered region spans residues 517–537 (SSVGCEQAPEEVSEARRENKR). ATP-binding positions include 677–684 (GETGTGKT) and 1084–1091 (GETSVGKT). Position 1177 is a phosphothreonine (Thr1177). 1390–1397 (GDTGCGKT) contributes to the ATP binding site. Lys1683 carries the N6-acetyllysine modification. AAA-ATPase protomer stretches follow at residues 1738 to 1995 (RLLR…AVFK) and 2053 to 2313 (MKCV…IYIS). Residues 1753–1760 (GSPGVGKT) and 2066–2073 (GPASVGKT) contribute to the ATP site. Ser1754 carries the post-translational modification Phosphoserine. The segment at 2418-4691 (SLRAHETWGD…EGEGMKDVSD (2274 aa)) is linker. A disordered region spans residues 3989-4008 (LVESDKEEQPDFLPRPTDGA). Thr4212 carries the post-translational modification Phosphothreonine. A Phosphoserine modification is found at Ser4538. Disordered stretches follow at residues 4669–4688 (ATEF…GMKD) and 4700–5260 (EDTF…SRES). The segment covering 4702 to 4724 (TFQKGQEKDKEDPDSKSDIKGED) has biased composition (basic and acidic residues). Over residues 4741 to 4757 (ELEEQEEDDEKSDSEGG) the composition is skewed to acidic residues. Phosphoserine is present on residues Ser4752 and Ser4754. Basic and acidic residues predominate over residues 4758–4780 (DLDKHMGDLNGEEADKLDERLWG). The span at 4781 to 4794 (DDDEEEDEEEEDNK) shows a compositional bias: acidic residues. Residues 4822–4834 (NKDKSQQDKKEEK) are compositionally biased toward basic and acidic residues. The span at 4835–4844 (EEAEADDGGQ) shows a compositional bias: acidic residues. The segment covering 4845 to 4855 (GEDKINEQIDE) has biased composition (basic and acidic residues). A compositionally biased stretch (acidic residues) spans 4877-4888 (EALDLPDDLNLD). Phosphoserine is present on Ser4889. Residues 4896–4908 (EDTDNEEGEEENP) show a composition bias toward acidic residues. Thr4898 carries the post-translational modification Phosphothreonine. Over residues 4909–4928 (LEIKEKPEEAGHEAEERGET) the composition is skewed to basic and acidic residues. Phosphoserine occurs at positions 4937 and 4946. A compositionally biased stretch (acidic residues) spans 4940 to 4966 (EPEEGPSEDDKAEGEEEMDTGADDQDG). Positions 4968-4989 (AAQHPEEHSEEQQQSVEEKDKE) are enriched in basic and acidic residues. Residues 5007–5021 (QEEEEREDSDTEEQV) show a composition bias toward acidic residues. Ser5015 carries the post-translational modification Phosphoserine. The span at 5033–5046 (CGQTGVENMQNTQA) shows a compositional bias: polar residues. Residues 5054-5064 (PEKEQGKEEHG) show a composition bias toward basic and acidic residues. Positions 5088 to 5101 (KHTRKNTQSFKRKP) are enriched in basic residues. Residues 5105–5115 (DNERSMGDHNE) are compositionally biased toward basic and acidic residues. Low complexity predominate over residues 5132-5141 (QGPAQQPQAQ). Over residues 5181–5197 (QEEEEIEDTLMDTEEQE) the composition is skewed to acidic residues. Basic and acidic residues-rich tracts occupy residues 5198 to 5213 (EFKA…EEIK) and 5233 to 5260 (KTEE…SRES). One can recognise a VWFA domain in the interval 5384 to 5583 (QICLAIDDSS…ALPETLSDAL (200 aa)).

The protein belongs to the midasin family. In terms of assembly, associates with pre-60S ribosomes in the nucleoplasm. Interacts (via its hexameric AAA ATPase ring) with the PELP1 complex (via PELP1); the interaction is regulated by SUMO conjugation of PELP1 and is crucial for recruitment of MDN1 to the pre-ribosomal particle. Interacts (via VWFA/MIDAS domain) with WDR12 (via UBL domain). Interacts (via VWFA/MIDAS domain) with NLE1 (via UBL domain).

Its subcellular location is the nucleus. The protein localises to the nucleolus. The protein resides in the nucleoplasm. It is found in the cytoplasm. In terms of biological role, nuclear chaperone required for maturation and nuclear export of pre-60S ribosome subunits. Functions at successive maturation steps to remove ribosomal factors at critical transition points, first driving the exit of early pre-60S particles from the nucleolus and then driving late pre-60S particles from the nucleus. At an early stage in 60S maturation, mediates the dissociation of the PeBoW complex (PES1-BOP1-WDR12) from early pre-60S particles, rendering them competent for export from the nucleolus to the nucleoplasm. Subsequently recruited to the nucleoplasmic particles through interaction with SUMO-conjugated PELP1 complex. This binding is only possible if the 5S RNP at the central protuberance has undergone the rotation to complete its maturation. This Homo sapiens (Human) protein is Midasin (MDN1).